A 251-amino-acid polypeptide reads, in one-letter code: CDP-diacylglycerol pyrophosphatase (251 aa).

Residues 4–24 (AGLLFLVMIVIAVVAAGIGYW) form a helical membrane-spanning segment.

The protein belongs to the Cdh family.

The protein resides in the cell inner membrane. The catalysed reaction is a CDP-1,2-diacyl-sn-glycerol + H2O = a 1,2-diacyl-sn-glycero-3-phosphate + CMP + 2 H(+). Its pathway is phospholipid metabolism; CDP-diacylglycerol degradation; phosphatidate from CDP-diacylglycerol: step 1/1. The polypeptide is CDP-diacylglycerol pyrophosphatase (Escherichia coli O9:H4 (strain HS)).